A 580-amino-acid polypeptide reads, in one-letter code: Pescadillo homolog (580 aa).

Positions 291 to 303 (EPEEENEVDEFPA) are enriched in acidic residues. Residues 291 to 321 (EPEEENEVDEFPADPENAGQEEEQKKQLQEE) are disordered. Residues 312 to 321 (EEQKKQLQEE) show a composition bias toward basic and acidic residues. The 94-residue stretch at 323 to 416 (KHKSMFVGLK…MLLPVEDYFP (94 aa)) folds into the BRCT domain. Positions 448-496 (KGENPEDDDDDDEEDDEDEEEDDEDEDDEENEEEEEDKKLRHLENKKVG) are disordered. Residues 452–483 (PEDDDDDDEEDDEDEEEDDEDEDDEENEEEEE) are compositionally biased toward acidic residues. Positions 484-494 (DKKLRHLENKK) are enriched in basic and acidic residues.

Belongs to the pescadillo family. As to quaternary structure, component of the PeBoW complex, composed of bop1, pes1 and wdr12. The complex is held together by bop1, which interacts with pes1 via its N-terminal domain and with wdr12 via a high-affinity interaction between the seven-bladed beta-propeller domains of the 2 proteins. The PeBoW complex associates with the 66S pre-ribosome.

Its subcellular location is the nucleus. The protein localises to the nucleolus. It localises to the nucleoplasm. Its function is as follows. Component of the PeBoW complex, which is required for maturation of 28S and 5.8S ribosomal RNAs and formation of the 60S ribosome. The chain is Pescadillo homolog (pes1) from Xenopus tropicalis (Western clawed frog).